A 758-amino-acid chain; its full sequence is MTIVTNLGFPRIGARRELKRALESHWRGETDATQLQHTARELRARHWRLQRDAGVDLPPSNDFSLYDHVLDTAFLFDAIPQRYHGLVDADPLAGYFAMARGRQADNIDLHALEMTKWFDTNYHYLVPELHRDQHFALRGNKPIAEFEEALALGITTRPVLLGPVSFLLLSKTVDGSNRLDLLERLLPVYTQLLRQLQESGAEWVQIDEPTLVLDLDAQTQQAFRKAYATLNQGPRPKLLLTSYFGPLGDNLELALQLPADGLHIDLVRGTEQLDAVLNTLPAGRVLSAGLVNGRNIWRTALDNALTLARYAQGRVDKDHLWLAPSCSLLHVPVDLEQEKNLDADVRNWLAFAKQKLSELRVLADALDNKPEAETALTQTRQALEARRQSPKVHRPDVAQRLAALTPDTTRRNTAYPQRSQAQQHTLNLPAYPTTTIGSFPQTLEVREARAQFKSGKLSESDYEAFLKAETERCVRTQEEIGLDVLVHGEFERNDMVEYFGEQLDGFIFTKLGWVQSYGSRCVKPPIIYGDVVRPAPMTVTWSAYAQSLTDKPMKGMLTGPVTMLQWSFVRDDQERAQTCRQIALALRDEVQDLEKAGIKVIQIDEPAIREGLPLRRGEWADYLNWAVESFRIASSNVHDTTQIHTHMCYSEFNDIIEAVAALDADVISIETSRSRMELLDAFVKFRYPNAIGPGVYDIHSPRVPQEEEMVLLLKKARAVLPPEQLWVNPDCGLKTRGWKETRAALQTMVHAAQRLRAE.

5-methyltetrahydropteroyltri-L-glutamate-binding positions include 16–19 (RELK) and Lys-116. L-homocysteine contacts are provided by residues 436 to 438 (IGS) and Glu-489. Residues 436–438 (IGS) and Glu-489 each bind L-methionine. 5-methyltetrahydropteroyltri-L-glutamate is bound by residues 520-521 (RC) and Trp-566. An L-homocysteine-binding site is contributed by Asp-604. Asp-604 contributes to the L-methionine binding site. Glu-610 is a binding site for 5-methyltetrahydropteroyltri-L-glutamate. Residues His-646, Cys-648, and Glu-670 each coordinate Zn(2+). The active-site Proton donor is His-699. Zn(2+) is bound at residue Cys-731.

Belongs to the vitamin-B12 independent methionine synthase family. It depends on Zn(2+) as a cofactor.

The enzyme catalyses 5-methyltetrahydropteroyltri-L-glutamate + L-homocysteine = tetrahydropteroyltri-L-glutamate + L-methionine. Its pathway is amino-acid biosynthesis; L-methionine biosynthesis via de novo pathway; L-methionine from L-homocysteine (MetE route): step 1/1. In terms of biological role, catalyzes the transfer of a methyl group from 5-methyltetrahydrofolate to homocysteine resulting in methionine formation. The chain is 5-methyltetrahydropteroyltriglutamate--homocysteine methyltransferase from Xylella fastidiosa (strain M12).